Reading from the N-terminus, the 243-residue chain is 1-(5-phosphoribosyl)-5-[(5-phosphoribosylamino)methylideneamino] imidazole-4-carboxamide isomerase (243 aa).

The active-site Proton acceptor is the D8. The Proton donor role is filled by D129.

This sequence belongs to the HisA/HisF family.

It is found in the cytoplasm. The enzyme catalyses 1-(5-phospho-beta-D-ribosyl)-5-[(5-phospho-beta-D-ribosylamino)methylideneamino]imidazole-4-carboxamide = 5-[(5-phospho-1-deoxy-D-ribulos-1-ylimino)methylamino]-1-(5-phospho-beta-D-ribosyl)imidazole-4-carboxamide. Its pathway is amino-acid biosynthesis; L-histidine biosynthesis; L-histidine from 5-phospho-alpha-D-ribose 1-diphosphate: step 4/9. The sequence is that of 1-(5-phosphoribosyl)-5-[(5-phosphoribosylamino)methylideneamino] imidazole-4-carboxamide isomerase from Parvibaculum lavamentivorans (strain DS-1 / DSM 13023 / NCIMB 13966).